A 362-amino-acid chain; its full sequence is Phosphoserine aminotransferase (362 aa).

Residue R41 coordinates L-glutamate. Residues 75–76 (GS), F101, T152, D173, and Q196 each bind pyridoxal 5'-phosphate. Position 197 is an N6-(pyridoxal phosphate)lysine (K197). 239 to 240 (NT) contacts pyridoxal 5'-phosphate.

The protein belongs to the class-V pyridoxal-phosphate-dependent aminotransferase family. SerC subfamily. As to quaternary structure, homodimer. Requires pyridoxal 5'-phosphate as cofactor.

The protein localises to the cytoplasm. It catalyses the reaction O-phospho-L-serine + 2-oxoglutarate = 3-phosphooxypyruvate + L-glutamate. The catalysed reaction is 4-(phosphooxy)-L-threonine + 2-oxoglutarate = (R)-3-hydroxy-2-oxo-4-phosphooxybutanoate + L-glutamate. The protein operates within amino-acid biosynthesis; L-serine biosynthesis; L-serine from 3-phospho-D-glycerate: step 2/3. Functionally, catalyzes the reversible conversion of 3-phosphohydroxypyruvate to phosphoserine and of 3-hydroxy-2-oxo-4-phosphonooxybutanoate to phosphohydroxythreonine. This Leuconostoc mesenteroides subsp. mesenteroides (strain ATCC 8293 / DSM 20343 / BCRC 11652 / CCM 1803 / JCM 6124 / NCDO 523 / NBRC 100496 / NCIMB 8023 / NCTC 12954 / NRRL B-1118 / 37Y) protein is Phosphoserine aminotransferase.